The following is a 434-amino-acid chain: Rubisco accumulation factor 1.1, chloroplastic (434 aa).

Residues 1–51 (MLSLTATTLSSSIFTQSKTHGFFNTRPVYRKPFTTITSALIPASNRQAPPK) constitute a chloroplast transit peptide. An N-terminal alpha-helix region spans residues 65–254 (IPPKFRSLDT…KAKKAVLREL (190 aa)). The interval 273–419 (VPVVRLRFGE…GMVVLVVRPP (147 aa)) is C-terminal beta sheet.

Belongs to the RAF family. In terms of assembly, homodimer.

The protein resides in the plastid. It localises to the chloroplast. In terms of biological role, required for assembly or stability of RuBisCO. Acts at a postchaperonin step to fold and/or assemble the large subunit (rbcL) into RuBisCO. RAF1 binds first to a rbcL dimer (rbcL(2)), leading to a rbcL(8)-RAF1(4) complex formation. In the next step, RBCS displaces RAF1, thus resulting in holoenzyme formation. The polypeptide is Rubisco accumulation factor 1.1, chloroplastic (Arabidopsis thaliana (Mouse-ear cress)).